Reading from the N-terminus, the 113-residue chain is Ig kappa chain V-II region MOPC 511 (113 aa).

The framework-1 stretch occupies residues 1–23; that stretch reads DIVITQDELSKPVTSGESVSISC. Cys-23 and Cys-93 are disulfide-bonded. The interval 24–39 is complementarity-determining-1; it reads RSSKSLLYKDGKTYLN. The segment at 40 to 54 is framework-2; sequence WFLQGPQQSPRLLIY. The tract at residues 55–61 is complementarity-determining-2; it reads LMSTRAS. Positions 62 to 93 are framework-3; the sequence is GVSDRFSGSGSGTDFTLEISRVKAEDVGVYYC. Residues 94-102 are complementarity-determining-3; it reads QQLVEYPLT. Positions 103-112 are framework-4; sequence FGAGTKLELK.

The chain is Ig kappa chain V-II region MOPC 511 from Mus musculus (Mouse).